We begin with the raw amino-acid sequence, 349 residues long: Phosphate acyltransferase (349 aa).

It belongs to the PlsX family. In terms of assembly, homodimer. Probably interacts with PlsY.

It is found in the cytoplasm. It catalyses the reaction a fatty acyl-[ACP] + phosphate = an acyl phosphate + holo-[ACP]. It participates in lipid metabolism; phospholipid metabolism. In terms of biological role, catalyzes the reversible formation of acyl-phosphate (acyl-PO(4)) from acyl-[acyl-carrier-protein] (acyl-ACP). This enzyme utilizes acyl-ACP as fatty acyl donor, but not acyl-CoA. This is Phosphate acyltransferase from Rhodopseudomonas palustris (strain BisA53).